The following is a 313-amino-acid chain: Apolipoprotein E (313 aa).

A signal peptide spans 1 to 18 (MKVLWVALVITLLAGCQA). Repeat copies occupy residues 79 to 100 (VLMDETMKEVKAYREELEEQLG), 101 to 122 (PIAQETQARVSKELQAAQARLA), 123 to 144 (SDMEDVRSRLAQYRSEVQAVMG), 145 to 166 (QTTDELRGRLASHLRKLRKRLL), 167 to 188 (RDAEDLQKRLAVYRAGAVEGSE), 189 to 209 (RSVSAIRERLGPLMEKGRGRA), 210 to 229 (GTLASQTLRERAEAWHQKLR), and 230 to 251 (GRVEEMGTQARDHLEEIREQLE). The 8 X 22 AA approximate tandem repeats stretch occupies residues 79 to 251 (VLMDETMKEV…HLEEIREQLE (173 aa)). Residues 157 to 167 (HLRKLRKRLLR) form an LDL and other lipoprotein receptors binding region. 161–164 (LRKR) contacts heparin. The tract at residues 209 to 286 (AGTLASQTLR…SWFEPLVEDM (78 aa)) is lipid-binding and lipoprotein association. Position 225–232 (225–232 (HQKLRGRV)) interacts with heparin. The interval 262–313 (SQIRLQAEAFQARLKSWFEPLVEDMQRQWAGLVEKVQLAMATSSTSAPSENH) is homooligomerization. A specificity for association with VLDL region spans residues 274–286 (RLKSWFEPLVEDM).

It belongs to the apolipoprotein A1/A4/E family. As to quaternary structure, homotetramer. May interact with ABCA1; functionally associated with ABCA1 in the biogenesis of HDLs. May interact with APP/A4 amyloid-beta peptide; the interaction is extremely stable in vitro but its physiological significance is unclear. May interact with MAPT. May interact with MAP2. In the cerebrospinal fluid, interacts with secreted SORL1. Interacts with PMEL; this allows the loading of PMEL luminal fragment on ILVs to induce fibril nucleation. APOE exists as multiple glycosylated and sialylated glycoforms within cells and in plasma. The extent of glycosylation and sialylation are tissue and context specific. In terms of processing, glycated in plasma VLDL. Post-translationally, phosphorylated by FAM20C in the extracellular medium.

The protein localises to the secreted. It localises to the extracellular space. Its subcellular location is the extracellular matrix. The protein resides in the extracellular vesicle. It is found in the endosome. The protein localises to the multivesicular body. In terms of biological role, APOE is an apolipoprotein, a protein associating with lipid particles, that mainly functions in lipoprotein-mediated lipid transport between organs via the plasma and interstitial fluids. APOE is a core component of plasma lipoproteins and is involved in their production, conversion and clearance. Apolipoproteins are amphipathic molecules that interact both with lipids of the lipoprotein particle core and the aqueous environment of the plasma. As such, APOE associates with chylomicrons, chylomicron remnants, very low density lipoproteins (VLDL) and intermediate density lipoproteins (IDL) but shows a preferential binding to high-density lipoproteins (HDL). It also binds a wide range of cellular receptors including the LDL receptor/LDLR and the very low-density lipoprotein receptor/VLDLR that mediate the cellular uptake of the APOE-containing lipoprotein particles. Finally, APOE also has a heparin-binding activity and binds heparan-sulfate proteoglycans on the surface of cells, a property that supports the capture and the receptor-mediated uptake of APOE-containing lipoproteins by cells. This Balaenoptera acutorostrata scammoni (North Pacific minke whale) protein is Apolipoprotein E (APOE).